The sequence spans 468 residues: UDP-N-acetylmuramate--L-alanine ligase (468 aa).

ATP is bound at residue 112–118; it reads GMHGKTT.

The protein belongs to the MurCDEF family.

It is found in the cytoplasm. It carries out the reaction UDP-N-acetyl-alpha-D-muramate + L-alanine + ATP = UDP-N-acetyl-alpha-D-muramoyl-L-alanine + ADP + phosphate + H(+). It functions in the pathway cell wall biogenesis; peptidoglycan biosynthesis. Its function is as follows. Cell wall formation. This is UDP-N-acetylmuramate--L-alanine ligase from Koribacter versatilis (strain Ellin345).